We begin with the raw amino-acid sequence, 266 residues long: Glucosamine-6-phosphate deaminase (266 aa).

The active-site Proton acceptor; for enolization step is Asp-72. Residue Asp-141 is the For ring-opening step of the active site. The Proton acceptor; for ring-opening step role is filled by His-143. The active-site For ring-opening step is Glu-148.

It belongs to the glucosamine/galactosamine-6-phosphate isomerase family. NagB subfamily. Homohexamer; trimer of disulfide-linked dimers.

It catalyses the reaction alpha-D-glucosamine 6-phosphate + H2O = beta-D-fructose 6-phosphate + NH4(+). The protein operates within amino-sugar metabolism; N-acetylneuraminate degradation; D-fructose 6-phosphate from N-acetylneuraminate: step 5/5. Allosterically activated by N-acetylglucosamine 6-phosphate (GlcNAc6P). Catalyzes the reversible isomerization-deamination of glucosamine 6-phosphate (GlcN6P) to form fructose 6-phosphate (Fru6P) and ammonium ion. The protein is Glucosamine-6-phosphate deaminase of Shigella flexneri serotype 5b (strain 8401).